The following is a 172-amino-acid chain: Myosin regulatory light chain 12B (172 aa).

The span at 1 to 16 (MSSKKAKTKTTKKRPQ) shows a compositional bias: basic residues. The segment at 1-20 (MSSKKAKTKTTKKRPQRATS) is disordered. Thr19 bears the Phosphothreonine; by MLCK and ZIPK/DAPK3 mark. A Phosphoserine; by MLCK and ZIPK/DAPK3 modification is found at Ser20. EF-hand domains follow at residues 29–64 (SQIQ…LGKN), 98–133 (DPED…MGDR), and 134–169 (FTDE…GAKD). Asp42, Asn44, Asp46, and Asp53 together coordinate Ca(2+).

As to quaternary structure, myosin is a hexamer of 2 heavy chains and 4 light chains: interacts with myosin heavy chain MYO19. Post-translationally, phosphorylation increases the actin-activated myosin ATPase activity and thereby regulates the contractile activity. It is required to generate the driving force in the migration of the cells but not necessary for localization of myosin-2 at the leading edge. Phosphorylation is reduced following epigallocatechin-3-O-gallate treatment. In terms of tissue distribution, ubiquitously expressed in various hematopoietic cells.

In terms of biological role, myosin regulatory subunit that plays an important role in regulation of both smooth muscle and nonmuscle cell contractile activity via its phosphorylation. Phosphorylation triggers actin polymerization in vascular smooth muscle. Implicated in cytokinesis, receptor capping, and cell locomotion. This is Myosin regulatory light chain 12B (MYL12B) from Homo sapiens (Human).